Consider the following 80-residue polypeptide: Cytochrome c oxidase subunit 7B, mitochondrial (80 aa).

The N-terminal 24 residues, 1–24, are a transit peptide targeting the mitochondrion; it reads MFPLAKNALSRLRVQSIQQAVARQ. Residues 25–32 lie on the Mitochondrial matrix side of the membrane; that stretch reads IHQKRAPD. Residues 33–59 traverse the membrane as a helical segment; sequence FHDKYGNAVLASGATFCVAVWVYMATQ. Residues 60–80 lie on the Mitochondrial intermembrane side of the membrane; it reads IGIEWNPSPVGRVTPKEWREQ.

This sequence belongs to the cytochrome c oxidase VIIb family. Component of the cytochrome c oxidase (complex IV, CIV), a multisubunit enzyme composed of 14 subunits. The complex is composed of a catalytic core of 3 subunits MT-CO1, MT-CO2 and MT-CO3, encoded in the mitochondrial DNA, and 11 supernumerary subunits COX4I1 (or COX4I2), COX5A, COX5B, COX6A2 (or COX6A1), COX6B1 (or COX6B2), COX6C, COX7A1 (or COX7A2), COX7B, COX7C, COX8B and NDUFA4, which are encoded in the nuclear genome. The complex exists as a monomer or a dimer and forms supercomplexes (SCs) in the inner mitochondrial membrane with NADH-ubiquinone oxidoreductase (complex I, CI) and ubiquinol-cytochrome c oxidoreductase (cytochrome b-c1 complex, complex III, CIII), resulting in different assemblies (supercomplex SCI(1)III(2)IV(1) and megacomplex MCI(2)III(2)IV(2)).

The protein resides in the mitochondrion inner membrane. It functions in the pathway energy metabolism; oxidative phosphorylation. In terms of biological role, component of the cytochrome c oxidase, the last enzyme in the mitochondrial electron transport chain which drives oxidative phosphorylation. The respiratory chain contains 3 multisubunit complexes succinate dehydrogenase (complex II, CII), ubiquinol-cytochrome c oxidoreductase (cytochrome b-c1 complex, complex III, CIII) and cytochrome c oxidase (complex IV, CIV), that cooperate to transfer electrons derived from NADH and succinate to molecular oxygen, creating an electrochemical gradient over the inner membrane that drives transmembrane transport and the ATP synthase. Cytochrome c oxidase is the component of the respiratory chain that catalyzes the reduction of oxygen to water. Electrons originating from reduced cytochrome c in the intermembrane space (IMS) are transferred via the dinuclear copper A center (CU(A)) of subunit 2 and heme A of subunit 1 to the active site in subunit 1, a binuclear center (BNC) formed by heme A3 and copper B (CU(B)). The BNC reduces molecular oxygen to 2 water molecules using 4 electrons from cytochrome c in the IMS and 4 protons from the mitochondrial matrix. Plays a role in proper central nervous system (CNS) development in vertebrates. This is Cytochrome c oxidase subunit 7B, mitochondrial (COX7B) from Bos taurus (Bovine).